A 525-amino-acid polypeptide reads, in one-letter code: Peptide chain release factor 3 (525 aa).

A tr-type G domain is found at A8 to Q276. GTP contacts are provided by residues S17 to T24, D85 to H89, and N139 to D142.

The protein belongs to the TRAFAC class translation factor GTPase superfamily. Classic translation factor GTPase family. PrfC subfamily.

It localises to the cytoplasm. Increases the formation of ribosomal termination complexes and stimulates activities of RF-1 and RF-2. It binds guanine nucleotides and has strong preference for UGA stop codons. It may interact directly with the ribosome. The stimulation of RF-1 and RF-2 is significantly reduced by GTP and GDP, but not by GMP. This chain is Peptide chain release factor 3, found in Coxiella burnetii (strain RSA 331 / Henzerling II).